Reading from the N-terminus, the 961-residue chain is Phosphofurin acidic cluster sorting protein 1 (961 aa).

Positions 1-19 (MAERGGAGGGPGGSGGGSS) are enriched in gly residues. 2 disordered regions span residues 1 to 70 (MAER…SSST) and 76 to 95 (VAVA…RTPA). An N-acetylalanine modification is found at Ala-2. Positions 20 to 34 (QRGSGVAQSPQQQPQ) are enriched in low complexity. Position 28 is a phosphoserine (Ser-28). Residues 35–46 (QQPPQPQQPTPP) show a composition bias toward pro residues. A Phosphothreonine modification is found at Thr-44. Residues 51–70 (ATSSSSSTSAAAASSSSSST) show a composition bias toward low complexity. Phosphotyrosine is present on Tyr-249. Positions 260-271 (GIKSKLSDRSPD) are enriched in basic and acidic residues. 2 disordered regions span residues 260-297 (GIKS…LHGQ) and 375-426 (NPSD…GKDT). A compositionally biased stretch (acidic residues) spans 274 to 291 (NYSEEEEESFSSEQEGSD). A coiled-coil region spans residues 351–375 (HVSREQIREVEEDLDELYDSLEMYN). 2 positions are modified to phosphoserine: Ser-377 and Ser-379. The segment covering 404–426 (MSQSSSQTEIGSLNSKGSLGKDT) has biased composition (polar residues). Residues Ser-428 and Ser-493 each carry the phosphoserine modification. Disordered regions lie at residues 475–540 (EKVK…HSTQ) and 758–802 (SPST…SMSS). Thr-502 carries the phosphothreonine modification. 5 positions are modified to phosphoserine: Ser-517, Ser-526, Ser-527, Ser-529, and Ser-532. The segment covering 768 to 802 (SPVVSLTVPSTSPPSSSGLSRDATATPPSSPSMSS) has biased composition (low complexity).

Belongs to the PACS family. In terms of assembly, associates with AP-1 and AP-3 but not with AP-2 complexes. Interacts with FURIN. Forms a ternary complex with FURIN and AP-1. Interacts with PKD2 (via acidic region). Interacts with SORL1. Interacts with WDR37.

Its subcellular location is the golgi apparatus. It localises to the trans-Golgi network. Functionally, coat protein that is involved in the localization of trans-Golgi network (TGN) membrane proteins that contain acidic cluster sorting motifs. Controls the endosome-to-Golgi trafficking of furin and mannose-6-phosphate receptor by connecting the acidic-cluster-containing cytoplasmic domain of these molecules with the adapter-protein complex-1 (AP-1) of endosomal clathrin-coated membrane pits. Required for normal ER Ca2+ handling in lymphocytes. Together with WDR37, it plays an essential role in lymphocyte development, quiescence and survival. Required for stabilizing peripheral lymphocyte populations. This chain is Phosphofurin acidic cluster sorting protein 1 (Pacs1), found in Mus musculus (Mouse).